Consider the following 176-residue polypeptide: Ribosome rescue factor SmrB (176 aa).

Residues 98–173 (LDVHGLNQDQ…RSTAILFLIH (76 aa)) form the Smr domain.

Belongs to the SmrB family. In terms of assembly, associates with collided ribosomes, but not with correctly translating polysomes.

In terms of biological role, acts as a ribosome collision sensor. Detects stalled/collided disomes (pairs of ribosomes where the leading ribosome is stalled and a second ribosome has collided with it) and endonucleolytically cleaves mRNA at the 5' boundary of the stalled ribosome. Stalled/collided disomes form a new interface (primarily via the 30S subunits) that binds SmrB. Cleaved mRNA becomes available for tmRNA ligation, leading to ribosomal subunit dissociation and rescue of stalled ribosomes. This Buchnera aphidicola subsp. Baizongia pistaciae (strain Bp) protein is Ribosome rescue factor SmrB.